The chain runs to 223 residues: 2-C-methyl-D-erythritol 4-phosphate cytidylyltransferase (223 aa).

The protein belongs to the IspD/TarI cytidylyltransferase family. IspD subfamily.

It carries out the reaction 2-C-methyl-D-erythritol 4-phosphate + CTP + H(+) = 4-CDP-2-C-methyl-D-erythritol + diphosphate. The protein operates within isoprenoid biosynthesis; isopentenyl diphosphate biosynthesis via DXP pathway; isopentenyl diphosphate from 1-deoxy-D-xylulose 5-phosphate: step 2/6. In terms of biological role, catalyzes the formation of 4-diphosphocytidyl-2-C-methyl-D-erythritol from CTP and 2-C-methyl-D-erythritol 4-phosphate (MEP). In Prochlorococcus marinus (strain MIT 9515), this protein is 2-C-methyl-D-erythritol 4-phosphate cytidylyltransferase.